Consider the following 429-residue polypeptide: Serine--tRNA ligase (429 aa).

236–238 (TAE) serves as a coordination point for L-serine. 267–269 (RRE) serves as a coordination point for ATP. E290 contributes to the L-serine binding site. An ATP-binding site is contributed by 354–357 (EISS). S390 is a binding site for L-serine.

The protein belongs to the class-II aminoacyl-tRNA synthetase family. Type-1 seryl-tRNA synthetase subfamily. Homodimer. The tRNA molecule binds across the dimer.

Its subcellular location is the cytoplasm. The catalysed reaction is tRNA(Ser) + L-serine + ATP = L-seryl-tRNA(Ser) + AMP + diphosphate + H(+). It carries out the reaction tRNA(Sec) + L-serine + ATP = L-seryl-tRNA(Sec) + AMP + diphosphate + H(+). It functions in the pathway aminoacyl-tRNA biosynthesis; selenocysteinyl-tRNA(Sec) biosynthesis; L-seryl-tRNA(Sec) from L-serine and tRNA(Sec): step 1/1. Functionally, catalyzes the attachment of serine to tRNA(Ser). Is also able to aminoacylate tRNA(Sec) with serine, to form the misacylated tRNA L-seryl-tRNA(Sec), which will be further converted into selenocysteinyl-tRNA(Sec). The polypeptide is Serine--tRNA ligase (Gloeobacter violaceus (strain ATCC 29082 / PCC 7421)).